Consider the following 296-residue polypeptide: Acetylglutamate kinase (296 aa).

Substrate-binding positions include 65–66 (GG), Arg-87, and Asn-190.

It belongs to the acetylglutamate kinase family. ArgB subfamily.

It is found in the cytoplasm. The catalysed reaction is N-acetyl-L-glutamate + ATP = N-acetyl-L-glutamyl 5-phosphate + ADP. It functions in the pathway amino-acid biosynthesis; L-arginine biosynthesis; N(2)-acetyl-L-ornithine from L-glutamate: step 2/4. Catalyzes the ATP-dependent phosphorylation of N-acetyl-L-glutamate. The polypeptide is Acetylglutamate kinase (Moorella thermoacetica (strain ATCC 39073 / JCM 9320)).